Reading from the N-terminus, the 387-residue chain is ADP,ATP carrier protein 2, mitochondrial (387 aa).

The N-terminal 77 residues, methionine 1–asparagine 77, are a transit peptide targeting the mitochondrion. 3 Solcar repeats span residues lysine 85–leucine 178, lysine 190–valine 282, and aspartate 290–leucine 376. The next 5 membrane-spanning stretches (helical) occupy residues phenylalanine 87 to leucine 114, threonine 155 to phenylalanine 179, tyrosine 188 to phenylalanine 208, phenylalanine 258 to isoleucine 279, and phenylalanine 293 to isoleucine 313. ADP is bound by residues arginine 160 and lysine 172. Arginine 317 provides a ligand contact to ADP. Residues arginine 317–methionine 322 form an important for transport activity region. A Nucleotide carrier signature motif motif is present at residues arginine 317–methionine 322. Residues alanine 353–leucine 373 form a helical membrane-spanning segment.

Belongs to the mitochondrial carrier (TC 2.A.29) family. Monomer.

It localises to the mitochondrion inner membrane. The catalysed reaction is ADP(in) + ATP(out) = ADP(out) + ATP(in). Its activity is regulated as follows. The matrix-open state (m-state) is inhibited by the membrane-permeable bongkrekic acid (BKA). The cytoplasmic-open state (c-state) is inhibited by the membrane-impermeable toxic inhibitor carboxyatractyloside (CATR). ADP:ATP antiporter that mediates import of ADP into the mitochondrial matrix for ATP synthesis, and export of ATP out to fuel the cell. Cycles between the cytoplasmic-open state (c-state) and the matrix-open state (m-state): operates by the alternating access mechanism with a single substrate-binding site intermittently exposed to either the cytosolic (c-state) or matrix (m-state) side of the inner mitochondrial membrane. This Zea mays (Maize) protein is ADP,ATP carrier protein 2, mitochondrial (ANT2).